Reading from the N-terminus, the 206-residue chain is Small ribosomal subunit protein uS4 (206 aa).

The S4 RNA-binding domain maps to 96–156 (GRLDNVVYRM…EKAKKQARIK (61 aa)).

The protein belongs to the universal ribosomal protein uS4 family. In terms of assembly, part of the 30S ribosomal subunit. Contacts protein S5. The interaction surface between S4 and S5 is involved in control of translational fidelity.

In terms of biological role, one of the primary rRNA binding proteins, it binds directly to 16S rRNA where it nucleates assembly of the body of the 30S subunit. Functionally, with S5 and S12 plays an important role in translational accuracy. The protein is Small ribosomal subunit protein uS4 of Aeromonas salmonicida (strain A449).